A 188-amino-acid chain; its full sequence is Elongation factor P (188 aa).

This sequence belongs to the elongation factor P family.

It is found in the cytoplasm. Its pathway is protein biosynthesis; polypeptide chain elongation. Functionally, involved in peptide bond synthesis. Stimulates efficient translation and peptide-bond synthesis on native or reconstituted 70S ribosomes in vitro. Probably functions indirectly by altering the affinity of the ribosome for aminoacyl-tRNA, thus increasing their reactivity as acceptors for peptidyl transferase. This Phenylobacterium zucineum (strain HLK1) protein is Elongation factor P.